The following is a 598-amino-acid chain: Elongation factor 4 (598 aa).

Residues 4 to 186 form the tr-type G domain; sequence SHIRNFAIIA…AIVSRLPAPS (183 aa). Residues 16–21 and 133–136 contribute to the GTP site; these read DHGKST and NKID.

Belongs to the TRAFAC class translation factor GTPase superfamily. Classic translation factor GTPase family. LepA subfamily.

It is found in the cell inner membrane. The catalysed reaction is GTP + H2O = GDP + phosphate + H(+). Its function is as follows. Required for accurate and efficient protein synthesis under certain stress conditions. May act as a fidelity factor of the translation reaction, by catalyzing a one-codon backward translocation of tRNAs on improperly translocated ribosomes. Back-translocation proceeds from a post-translocation (POST) complex to a pre-translocation (PRE) complex, thus giving elongation factor G a second chance to translocate the tRNAs correctly. Binds to ribosomes in a GTP-dependent manner. The protein is Elongation factor 4 of Ehrlichia chaffeensis (strain ATCC CRL-10679 / Arkansas).